The following is a 230-amino-acid chain: MSKKAVVLYSGGLDSTTCLAEARAAGFTPYALSFHYGQRHTVELEKARLYAPQVGAADHMVIDFDLRRIGGSALTSDEEVPKGREIDDAIPVTYVPARNTIFLSFALGWAEVLGSFDIFIGVNALDYSGYPDCRPEFISAFEQLANLATKAGVEGQGQYRVHAPLLHLTKAQIIKRGLELGVDYSLTHSCYDPTPEGLACGLCDSCQLRLKGFAEAGISDPAAYAREVQR.

9 to 19 (YSGGLDSTTCL) contributes to the ATP binding site. Positions 190, 200, 203, and 206 each coordinate Zn(2+).

Belongs to the QueC family. Requires Zn(2+) as cofactor.

It carries out the reaction 7-carboxy-7-deazaguanine + NH4(+) + ATP = 7-cyano-7-deazaguanine + ADP + phosphate + H2O + H(+). It functions in the pathway purine metabolism; 7-cyano-7-deazaguanine biosynthesis. Functionally, catalyzes the ATP-dependent conversion of 7-carboxy-7-deazaguanine (CDG) to 7-cyano-7-deazaguanine (preQ(0)). The polypeptide is 7-cyano-7-deazaguanine synthase (Syntrophotalea carbinolica (strain DSM 2380 / NBRC 103641 / GraBd1) (Pelobacter carbinolicus)).